The following is a 219-amino-acid chain: MEKKITGYTTVDISQWHRKEHFEAFQSVAQCTYNQTVQLDITAFLKTVKKNKHKFYPAFIHILARLMNAHPEFRMAMKDGELVIWDSVHPCYTVFHEQTETFSSLWSEYHDDFRQFLHIYSQDVACYGENLAYFPKGFIENMFFVSANPWVSFTSFDLNVAAMDNFFAPVFTMGKYYTQGDKVLMPLAIQVHHAVCDGFHVGRMLNELQQYCDEWQGGA.

The Proton acceptor role is filled by His193.

Belongs to the chloramphenicol acetyltransferase family. In terms of assembly, homotrimer.

The catalysed reaction is chloramphenicol + acetyl-CoA = chloramphenicol 3-acetate + CoA. Its function is as follows. This enzyme is an effector of chloramphenicol resistance in bacteria. The polypeptide is Chloramphenicol acetyltransferase (cat) (Klebsiella sp).